The primary structure comprises 790 residues: Penicillin-binding protein 1A (790 aa).

Residues 1–6 are Cytoplasmic-facing; sequence MYKSLL. Residues 7 to 27 traverse the membrane as a helical; Signal-anchor for type II membrane protein segment; that stretch reads FCLKIFVFLILVGCGITAYII. Residues 28-790 are Periplasmic-facing; sequence YHYSRDLPDY…SKEDQSQEIY (763 aa). Residues 49 to 220 are transglycosylase; that stretch reads TRIYSRDGKL…SELNPERNYA (172 aa). Glutamate 87 acts as the Proton donor; for transglycosylase activity in catalysis. The tract at residues 398-711 is transpeptidase; it reads DVIVVEAIKE…SNVVLPIFID (314 aa). Catalysis depends on serine 457, which acts as the Acyl-ester intermediate; for transpeptidase activity.

This sequence in the N-terminal section; belongs to the glycosyltransferase 51 family. The protein in the C-terminal section; belongs to the transpeptidase family.

The protein localises to the cell inner membrane. It carries out the reaction [GlcNAc-(1-&gt;4)-Mur2Ac(oyl-L-Ala-gamma-D-Glu-L-Lys-D-Ala-D-Ala)](n)-di-trans,octa-cis-undecaprenyl diphosphate + beta-D-GlcNAc-(1-&gt;4)-Mur2Ac(oyl-L-Ala-gamma-D-Glu-L-Lys-D-Ala-D-Ala)-di-trans,octa-cis-undecaprenyl diphosphate = [GlcNAc-(1-&gt;4)-Mur2Ac(oyl-L-Ala-gamma-D-Glu-L-Lys-D-Ala-D-Ala)](n+1)-di-trans,octa-cis-undecaprenyl diphosphate + di-trans,octa-cis-undecaprenyl diphosphate + H(+). It catalyses the reaction Preferential cleavage: (Ac)2-L-Lys-D-Ala-|-D-Ala. Also transpeptidation of peptidyl-alanyl moieties that are N-acyl substituents of D-alanine.. It participates in cell wall biogenesis; peptidoglycan biosynthesis. Its function is as follows. Cell wall formation. Synthesis of cross-linked peptidoglycan from the lipid intermediates. The enzyme has a penicillin-insensitive transglycosylase N-terminal domain (formation of linear glycan strands) and a penicillin-sensitive transpeptidase C-terminal domain (cross-linking of the peptide subunits). The sequence is that of Penicillin-binding protein 1A (mrcA) from Rickettsia conorii (strain ATCC VR-613 / Malish 7).